A 225-amino-acid chain; its full sequence is Ribosome maturation factor RimM (225 aa).

Positions 144–225 (ADEFYWVDLI…RIVVDWEADY (82 aa)) constitute a PRC barrel domain.

This sequence belongs to the RimM family. As to quaternary structure, binds ribosomal protein uS19.

It is found in the cytoplasm. Functionally, an accessory protein needed during the final step in the assembly of 30S ribosomal subunit, possibly for assembly of the head region. Essential for efficient processing of 16S rRNA. May be needed both before and after RbfA during the maturation of 16S rRNA. It has affinity for free ribosomal 30S subunits but not for 70S ribosomes. The chain is Ribosome maturation factor RimM from Burkholderia orbicola (strain MC0-3).